Consider the following 48-residue polypeptide: Phospholipase A2 TI-Nh (48 aa).

The active site involves H25. Residue D26 participates in Ca(2+) binding.

This sequence belongs to the phospholipase A2 family. Group I subfamily. D49 sub-subfamily. As to quaternary structure, monomer. Ca(2+) is required as a cofactor. Expressed by the venom gland.

It is found in the secreted. It catalyses the reaction a 1,2-diacyl-sn-glycero-3-phosphocholine + H2O = a 1-acyl-sn-glycero-3-phosphocholine + a fatty acid + H(+). In terms of biological role, phospholipase A2 with weak enzymatic activity, which partially inhibits thrombin enzymatic activity (Ki=73 nM), completely inhibits thrombin-induced platelet aggregation and retards fibrin clot formation (IC(50)=0.2 nM). May exert this anticoagulant effect through a non-enzymatic mechanism. The protein is Phospholipase A2 TI-Nh of Naja haje haje (Egyptian cobra).